We begin with the raw amino-acid sequence, 429 residues long: Adenylosuccinate synthetase (429 aa).

Residues 12-18 and 40-42 each bind GTP; these read GDEGKGK and GHT. The active-site Proton acceptor is aspartate 13. Positions 13 and 40 each coordinate Mg(2+). IMP contacts are provided by residues 13–16, 38–41, threonine 128, arginine 142, glutamine 223, threonine 238, and arginine 302; these read DEGK and NAGH. The Proton donor role is filled by histidine 41. Residue 298-304 participates in substrate binding; sequence TTTGRPR. Residues arginine 304, 330-332, and 412-414 contribute to the GTP site; these read SID and SVG.

Belongs to the adenylosuccinate synthetase family. Homodimer. Mg(2+) is required as a cofactor.

Its subcellular location is the cytoplasm. The catalysed reaction is IMP + L-aspartate + GTP = N(6)-(1,2-dicarboxyethyl)-AMP + GDP + phosphate + 2 H(+). Its pathway is purine metabolism; AMP biosynthesis via de novo pathway; AMP from IMP: step 1/2. Its function is as follows. Plays an important role in the de novo pathway of purine nucleotide biosynthesis. Catalyzes the first committed step in the biosynthesis of AMP from IMP. This Bacillus thuringiensis (strain Al Hakam) protein is Adenylosuccinate synthetase.